Consider the following 435-residue polypeptide: ATP-dependent protease ATPase subunit HslU (435 aa).

ATP contacts are provided by residues valine 18, 60-65, aspartate 248, glutamate 313, and arginine 385; that span reads GCGKTE.

It belongs to the ClpX chaperone family. HslU subfamily. In terms of assembly, a double ring-shaped homohexamer of HslV is capped on each side by a ring-shaped HslU homohexamer. The assembly of the HslU/HslV complex is dependent on binding of ATP.

The protein resides in the cytoplasm. Its function is as follows. ATPase subunit of a proteasome-like degradation complex; this subunit has chaperone activity. The binding of ATP and its subsequent hydrolysis by HslU are essential for unfolding of protein substrates subsequently hydrolyzed by HslV. HslU recognizes the N-terminal part of its protein substrates and unfolds these before they are guided to HslV for hydrolysis. The polypeptide is ATP-dependent protease ATPase subunit HslU (Beijerinckia indica subsp. indica (strain ATCC 9039 / DSM 1715 / NCIMB 8712)).